The following is a 70-amino-acid chain: DNA gyrase inhibitor YacG (70 aa).

4 residues coordinate Zn(2+): C20, C23, C35, and C39.

This sequence belongs to the DNA gyrase inhibitor YacG family. In terms of assembly, interacts with GyrB. Zn(2+) is required as a cofactor.

Functionally, inhibits all the catalytic activities of DNA gyrase by preventing its interaction with DNA. Acts by binding directly to the C-terminal domain of GyrB, which probably disrupts DNA binding by the gyrase. The sequence is that of DNA gyrase inhibitor YacG from Rhizobium etli (strain CIAT 652).